Consider the following 129-residue polypeptide: Iron-sulfur cluster assembly 1 homolog, mitochondrial (129 aa).

The N-terminal 12 residues, 1-12, are a transit peptide targeting the mitochondrion; sequence MSASLVRATVRA. C57, C121, and C123 together coordinate Fe cation.

It belongs to the HesB/IscA family. In terms of assembly, interacts with CRY2, but not with CRY1 (in vitro).

Its subcellular location is the mitochondrion. Functionally, involved in the maturation of mitochondrial 4Fe-4S proteins functioning late in the iron-sulfur cluster assembly pathway. Probably involved in the binding of an intermediate of Fe/S cluster assembly. This chain is Iron-sulfur cluster assembly 1 homolog, mitochondrial (Isca1), found in Mus musculus (Mouse).